The primary structure comprises 118 residues: Aspartate 1-decarboxylase (118 aa).

The active-site Schiff-base intermediate with substrate; via pyruvic acid is Ser25. Residue Ser25 is modified to Pyruvic acid (Ser). Thr57 contributes to the substrate binding site. Tyr58 serves as the catalytic Proton donor. Gly73 to Ala75 serves as a coordination point for substrate.

Belongs to the PanD family. As to quaternary structure, heterooctamer of four alpha and four beta subunits. Pyruvate serves as cofactor. Is synthesized initially as an inactive proenzyme, which is activated by self-cleavage at a specific serine bond to produce a beta-subunit with a hydroxyl group at its C-terminus and an alpha-subunit with a pyruvoyl group at its N-terminus.

The protein resides in the cytoplasm. It catalyses the reaction L-aspartate + H(+) = beta-alanine + CO2. It participates in cofactor biosynthesis; (R)-pantothenate biosynthesis; beta-alanine from L-aspartate: step 1/1. In terms of biological role, catalyzes the pyruvoyl-dependent decarboxylation of aspartate to produce beta-alanine. This is Aspartate 1-decarboxylase from Leptospira biflexa serovar Patoc (strain Patoc 1 / Ames).